A 696-amino-acid polypeptide reads, in one-letter code: Polyribonucleotide nucleotidyltransferase (696 aa).

The Mg(2+) site is built by D483 and D489. Residues 550–609 (PRITTIYVKTDKIRDVIGSGGKNIRGITEATGVTIDIDDTGKINIASTDKAACDMAIKMI) enclose the KH domain. An S1 motif domain is found at 619–687 (GKLYMGLVKK…KQGKIKLSRK (69 aa)).

Belongs to the polyribonucleotide nucleotidyltransferase family. The cofactor is Mg(2+).

Its subcellular location is the cytoplasm. It carries out the reaction RNA(n+1) + phosphate = RNA(n) + a ribonucleoside 5'-diphosphate. In terms of biological role, involved in mRNA degradation. Catalyzes the phosphorolysis of single-stranded polyribonucleotides processively in the 3'- to 5'-direction. The polypeptide is Polyribonucleotide nucleotidyltransferase (Geotalea daltonii (strain DSM 22248 / JCM 15807 / FRC-32) (Geobacter daltonii)).